Consider the following 98-residue polypeptide: Alpha-elicitin MGM-alpha (98 aa).

Intrachain disulfides connect cysteine 3-cysteine 71, cysteine 27-cysteine 56, and cysteine 51-cysteine 95.

Belongs to the elicitin family.

The protein localises to the secreted. Its function is as follows. Induces local and distal defense responses (incompatible hypersensitive reaction) in plants from the solanaceae and cruciferae families. Elicits leaf necrosis and causes the accumulation of pathogenesis-related proteins. Might interact with the lipidic molecules of the plasma membrane. In Phytophthora megasperma (Potato pink rot fungus), this protein is Alpha-elicitin MGM-alpha.